We begin with the raw amino-acid sequence, 738 residues long: DNA topoisomerase 4 subunit A (738 aa).

The Topo IIA-type catalytic domain occupies 32–496 (LPDVRDGLKP…SFEEVTLTNQ (465 aa)). Tyr120 functions as the O-(5'-phospho-DNA)-tyrosine intermediate in the catalytic mechanism.

The protein belongs to the type II topoisomerase GyrA/ParC subunit family. ParC type 1 subfamily. Heterotetramer composed of ParC and ParE.

The protein localises to the cell membrane. The enzyme catalyses ATP-dependent breakage, passage and rejoining of double-stranded DNA.. Its function is as follows. Topoisomerase IV is essential for chromosome segregation. It relaxes supercoiled DNA. Performs the decatenation events required during the replication of a circular DNA molecule. This is DNA topoisomerase 4 subunit A from Rickettsia conorii (strain ATCC VR-613 / Malish 7).